A 235-amino-acid polypeptide reads, in one-letter code: 2,3-bisphosphoglycerate-dependent phosphoglycerate mutase (235 aa).

Residues 8-15 (RHGESIWN), 21-22 (TG), Arg-58, 110-113 (ERYY), Lys-121, 137-138 (RR), and 181-182 (GN) each bind substrate. His-9 acts as the Tele-phosphohistidine intermediate in catalysis. Glu-110 serves as the catalytic Proton donor/acceptor.

It belongs to the phosphoglycerate mutase family. BPG-dependent PGAM subfamily.

The enzyme catalyses (2R)-2-phosphoglycerate = (2R)-3-phosphoglycerate. Its pathway is carbohydrate degradation; glycolysis; pyruvate from D-glyceraldehyde 3-phosphate: step 3/5. Catalyzes the interconversion of 2-phosphoglycerate and 3-phosphoglycerate. This chain is 2,3-bisphosphoglycerate-dependent phosphoglycerate mutase, found in Methanococcus vannielii (strain ATCC 35089 / DSM 1224 / JCM 13029 / OCM 148 / SB).